The sequence spans 357 residues: Peptide chain release factor 1 (357 aa).

Glutamine 234 bears the N5-methylglutamine mark. The tract at residues 283–313 (SKKQEQRSSNRKQQVGSGDRSERIRTYNFPQ) is disordered.

This sequence belongs to the prokaryotic/mitochondrial release factor family. Methylated by PrmC. Methylation increases the termination efficiency of RF1.

The protein resides in the cytoplasm. Its function is as follows. Peptide chain release factor 1 directs the termination of translation in response to the peptide chain termination codons UAG and UAA. The chain is Peptide chain release factor 1 (prfA) from Borreliella burgdorferi (strain ATCC 35210 / DSM 4680 / CIP 102532 / B31) (Borrelia burgdorferi).